We begin with the raw amino-acid sequence, 236 residues long: Phosphoribosylaminoimidazole-succinocarboxamide synthase (236 aa).

It belongs to the SAICAR synthetase family.

The enzyme catalyses 5-amino-1-(5-phospho-D-ribosyl)imidazole-4-carboxylate + L-aspartate + ATP = (2S)-2-[5-amino-1-(5-phospho-beta-D-ribosyl)imidazole-4-carboxamido]succinate + ADP + phosphate + 2 H(+). It participates in purine metabolism; IMP biosynthesis via de novo pathway; 5-amino-1-(5-phospho-D-ribosyl)imidazole-4-carboxamide from 5-amino-1-(5-phospho-D-ribosyl)imidazole-4-carboxylate: step 1/2. The polypeptide is Phosphoribosylaminoimidazole-succinocarboxamide synthase (Rickettsia akari (strain Hartford)).